We begin with the raw amino-acid sequence, 303 residues long: Taste receptor type 2 member 13 (303 aa).

Residues 1–7 (MESALPS) are Extracellular-facing. A helical transmembrane segment spans residues 8–28 (IFTLVIIAEFIIGNLSNGFIV). The Cytoplasmic segment spans residues 29 to 55 (LINCIDWVSKRELSSVDKLLIILAISR). The chain crosses the membrane as a helical span at residues 56 to 76 (IGLIWEILVSWFLALHSLAIF). The Extracellular segment spans residues 77 to 85 (VSGTGLRIM). The chain crosses the membrane as a helical span at residues 86–106 (IFSWIVSNHFNLWLATILSIF). Residues 107–128 (YLLKIASFSSPAFLYLKRRVNK) lie on the Cytoplasmic side of the membrane. Residues 129–149 (VILMILLGTLVFLFLNLIQIN) traverse the membrane as a helical segment. Residues 150–184 (MLIKDWLDRYERNTTWNFSMSDFETFSVSVRFTMT) are Extracellular-facing. N-linked (GlcNAc...) asparagine glycosylation is found at Asn162 and Asn166. Residues 185–205 (MFSLTPFTVAFISFLLLVFSL) form a helical membrane-spanning segment. Residues 206–232 (QKHLQKMQLNYKGHRDPRTKVHTNALK) lie on the Cytoplasmic side of the membrane. Residues 233 to 253 (IVISFLLLYASFFLSILISWI) traverse the membrane as a helical segment. The Extracellular portion of the chain corresponds to 254–261 (SELYQNTV). A helical membrane pass occupies residues 262–282 (IYMLCETIGAFYPSSHSFLLI). The Cytoplasmic portion of the chain corresponds to 283 to 303 (LGNAKLRQAFLLVAAKVWAKR).

Belongs to the G-protein coupled receptor T2R family.

It localises to the membrane. In terms of biological role, receptor that may play a role in the perception of bitterness and is gustducin-linked. May play a role in sensing the chemical composition of the gastrointestinal content. The activity of this receptor may stimulate alpha gustducin, mediate PLC-beta-2 activation and lead to the gating of TRPM5. The chain is Taste receptor type 2 member 13 (TAS2R13) from Pan troglodytes (Chimpanzee).